The sequence spans 310 residues: Coproporphyrin III ferrochelatase (310 aa).

Fe(2+) contacts are provided by His184 and Glu265.

The protein belongs to the ferrochelatase family.

The protein resides in the cytoplasm. It carries out the reaction Fe-coproporphyrin III + 2 H(+) = coproporphyrin III + Fe(2+). Its pathway is porphyrin-containing compound metabolism; protoheme biosynthesis. Its function is as follows. Involved in coproporphyrin-dependent heme b biosynthesis. Catalyzes the insertion of ferrous iron into coproporphyrin III to form Fe-coproporphyrin III. In Limosilactobacillus reuteri (strain DSM 20016) (Lactobacillus reuteri), this protein is Coproporphyrin III ferrochelatase.